The chain runs to 354 residues: Uroporphyrinogen decarboxylase (354 aa).

Residues 27–31 (RQAGR), Asp77, Tyr154, Thr209, and His327 contribute to the substrate site.

It belongs to the uroporphyrinogen decarboxylase family. Homodimer.

It localises to the cytoplasm. The enzyme catalyses uroporphyrinogen III + 4 H(+) = coproporphyrinogen III + 4 CO2. It functions in the pathway porphyrin-containing compound metabolism; protoporphyrin-IX biosynthesis; coproporphyrinogen-III from 5-aminolevulinate: step 4/4. In terms of biological role, catalyzes the decarboxylation of four acetate groups of uroporphyrinogen-III to yield coproporphyrinogen-III. The polypeptide is Uroporphyrinogen decarboxylase (Escherichia coli O6:K15:H31 (strain 536 / UPEC)).